The chain runs to 160 residues: N-acetyltransferase Pat (160 aa).

An N-acetyltransferase domain is found at 5–148 (IKIRKATKED…VYGEMRLTER (144 aa)). CoA contacts are provided by leucine 79, valine 81, threonine 87, glycine 89, glycine 91, threonine 92, asparagine 118, lysine 123, and lysine 127.

This sequence belongs to the acetyltransferase family. GNAT subfamily.

It carries out the reaction L-lysyl-[protein] + acetyl-CoA = N(6)-acetyl-L-lysyl-[protein] + CoA + H(+). In terms of biological role, modulates activity of albA1, the major archaeal DNA compaction protein, by decreasing albA1's nucleic acid binding affinity through acetylation of 'Lys-16'. This chain is N-acetyltransferase Pat, found in Saccharolobus solfataricus (strain ATCC 35092 / DSM 1617 / JCM 11322 / P2) (Sulfolobus solfataricus).